Reading from the N-terminus, the 340-residue chain is Glyceraldehyde-3-phosphate dehydrogenase (340 aa).

Residues 11–12 (TI) and G109 each bind NAD(+). 138 to 140 (SCN) contributes to the D-glyceraldehyde 3-phosphate binding site. C139 functions as the Nucleophile in the catalytic mechanism. R167 contacts NAD(+). Residue 193-194 (HA) coordinates D-glyceraldehyde 3-phosphate. Residue Q300 participates in NAD(+) binding.

Belongs to the glyceraldehyde-3-phosphate dehydrogenase family. As to quaternary structure, homotetramer.

The protein resides in the cytoplasm. It catalyses the reaction D-glyceraldehyde 3-phosphate + phosphate + NADP(+) = (2R)-3-phospho-glyceroyl phosphate + NADPH + H(+). The catalysed reaction is D-glyceraldehyde 3-phosphate + phosphate + NAD(+) = (2R)-3-phospho-glyceroyl phosphate + NADH + H(+). The protein operates within carbohydrate degradation; glycolysis; pyruvate from D-glyceraldehyde 3-phosphate: step 1/5. The sequence is that of Glyceraldehyde-3-phosphate dehydrogenase from Metallosphaera sedula (strain ATCC 51363 / DSM 5348 / JCM 9185 / NBRC 15509 / TH2).